A 193-amino-acid chain; its full sequence is Large ribosomal subunit protein uL5 (193 aa).

Belongs to the universal ribosomal protein uL5 family. As to quaternary structure, part of the 50S ribosomal subunit; part of the 5S rRNA/L5/L18/L25 subcomplex. Contacts the 5S rRNA and the P site tRNA. Forms a bridge to the 30S subunit in the 70S ribosome.

Functionally, this is one of the proteins that bind and probably mediate the attachment of the 5S RNA into the large ribosomal subunit, where it forms part of the central protuberance. In the 70S ribosome it contacts protein S13 of the 30S subunit (bridge B1b), connecting the 2 subunits; this bridge is implicated in subunit movement. Contacts the P site tRNA; the 5S rRNA and some of its associated proteins might help stabilize positioning of ribosome-bound tRNAs. The polypeptide is Large ribosomal subunit protein uL5 (Novosphingobium aromaticivorans (strain ATCC 700278 / DSM 12444 / CCUG 56034 / CIP 105152 / NBRC 16084 / F199)).